A 588-amino-acid chain; its full sequence is Glutamate--tRNA ligase (588 aa).

Residues 112–122 carry the 'HIGH' region motif; that stretch reads PNPDFYLHLGS.

It belongs to the class-I aminoacyl-tRNA synthetase family. Glutamate--tRNA ligase type 2 subfamily.

It localises to the cytoplasm. The enzyme catalyses tRNA(Glu) + L-glutamate + ATP = L-glutamyl-tRNA(Glu) + AMP + diphosphate. In terms of biological role, catalyzes the attachment of glutamate to tRNA(Glu) in a two-step reaction: glutamate is first activated by ATP to form Glu-AMP and then transferred to the acceptor end of tRNA(Glu). This chain is Glutamate--tRNA ligase, found in Caldivirga maquilingensis (strain ATCC 700844 / DSM 13496 / JCM 10307 / IC-167).